The following is a 245-amino-acid chain: Transmembrane and ubiquitin-like domain-containing protein 1 (245 aa).

The tract at residues 2-30 (ALIEGVGDEVTVLFAVLACLLVLALAWVS) is required to release iHOPS from membranes. Residues 11 to 31 (VTVLFAVLACLLVLALAWVST) traverse the membrane as a helical segment. The segment at 33 to 100 (TTESTDPQPQ…ASTPPDSPQE (68 aa)) is disordered. Residues Ser-73, Ser-97, and Ser-126 each carry the phosphoserine modification. In terms of domain architecture, Ubiquitin-like spans 102-175 (LLLRLKFLND…LHCHVSTRVG (74 aa)). A run of 2 helical transmembrane segments spans residues 194–214 (IGSL…YCQI) and 219–239 (FFPL…SLLA).

In terms of assembly, interacts with EEF1A1, CAMLG, GRIA2 and GRIP1. Interacts with NPM1 and CDKN2A; TMUB1 can enhance interaction between NPM1 and CDKN2A and is proposed to bridge the proteins; proposed to be mediated by iHOPS. Interacts with TUBG1. Interacts with ERLIN2 and AMFR; TMUB1 promotes the interaction of ERLIN2 with AMFR. Isoform 1 (lHOPS) is processed by regulated intramembrane proteolysis (RIP) in the N-terminus to release iHOPS from membranes. In terms of processing, isoform 2 seems to undergo a selective cleavage in the C-terminal region to release an additional cytoplasmic form. In terms of tissue distribution, expressed in adult brain; at protein level. Isoform 1 (lHOPS) is highly expressed in small intestine, stomach and epididymis. Isoform 2 (sHOPS) and iHOPS are abundantly expressed in brain, liver and adrenal gland.

The protein resides in the membrane. The protein localises to the postsynaptic cell membrane. It localises to the recycling endosome. Its subcellular location is the cytoplasm. It is found in the nucleus. The protein resides in the nucleolus. The protein localises to the cytoskeleton. It localises to the microtubule organizing center. Its subcellular location is the centrosome. Its function is as follows. Involved in sterol-regulated ubiquitination and degradation of HMG-CoA reductase HMGCR. Involved in positive regulation of AMPA-selective glutamate receptor GRIA2 recycling to the cell surface. Acts as a negative regulator of hepatocyte growth during regeneration. In terms of biological role, may contribute to the regulation of translation during cell-cycle progression. May contribute to the regulation of cell proliferation. May be involved in centrosome assembly. Modulates stabilization and nucleolar localization of tumor suppressor CDKN2A and enhances association between CDKN2A and NPM1. This Mus musculus (Mouse) protein is Transmembrane and ubiquitin-like domain-containing protein 1 (Tmub1).